The primary structure comprises 369 residues: 3-dehydroquinate synthase (369 aa).

NAD(+)-binding positions include 71–76, 105–109, 129–130, Lys-142, Lys-151, and 169–172; these read DGECHK, GVIND, TT, and TLST. Glu-184, His-247, and His-264 together coordinate Zn(2+).

It belongs to the sugar phosphate cyclases superfamily. Dehydroquinate synthase family. The cofactor is Co(2+). Requires Zn(2+) as cofactor. NAD(+) serves as cofactor.

The protein localises to the cytoplasm. The enzyme catalyses 7-phospho-2-dehydro-3-deoxy-D-arabino-heptonate = 3-dehydroquinate + phosphate. Its pathway is metabolic intermediate biosynthesis; chorismate biosynthesis; chorismate from D-erythrose 4-phosphate and phosphoenolpyruvate: step 2/7. In terms of biological role, catalyzes the conversion of 3-deoxy-D-arabino-heptulosonate 7-phosphate (DAHP) to dehydroquinate (DHQ). This chain is 3-dehydroquinate synthase, found in Dichelobacter nodosus (strain VCS1703A).